Consider the following 353-residue polypeptide: Bone morphogenetic protein 2 (353 aa).

The propeptide occupies 1–239 (GSLKRPEDLL…GHPLHKREKR (239 aa)). Residues Asn-91, Asn-121, and Asn-157 are each glycosylated (N-linked (GlcNAc...) asparagine). The segment at 228-248 (GKGHPLHKREKRQAKHKQRKR) is disordered. Over residues 231–248 (HPLHKREKRQAKHKQRKR) the composition is skewed to basic residues. Disulfide bonds link Cys-253–Cys-318, Cys-282–Cys-350, and Cys-286–Cys-352. N-linked (GlcNAc...) asparagine glycosylation is present at Asn-295.

Belongs to the TGF-beta family. In terms of assembly, homodimer; disulfide-linked.

It is found in the secreted. Negatively regulates the structure and function of the limb apical ectodermal ridge. This chain is Bone morphogenetic protein 2 (BMP2), found in Gallus gallus (Chicken).